We begin with the raw amino-acid sequence, 158 residues long: Transcription elongation factor GreB (158 aa).

Residues 53–75 (KRRLREIDRRVRFLTKRLEVLQI) are a coiled coil.

It belongs to the GreA/GreB family. GreB subfamily.

In terms of biological role, necessary for efficient RNA polymerase transcription elongation past template-encoded arresting sites. The arresting sites in DNA have the property of trapping a certain fraction of elongating RNA polymerases that pass through, resulting in locked ternary complexes. Cleavage of the nascent transcript by cleavage factors such as GreA or GreB allows the resumption of elongation from the new 3'terminus. GreB releases sequences of up to 9 nucleotides in length. This Pasteurella multocida (strain Pm70) protein is Transcription elongation factor GreB.